A 278-amino-acid polypeptide reads, in one-letter code: MSVLRSTCLFFPPRSLLISFNKRRLFSTSRLILNKESETTKKKDKSKQQDFNPRHLGVAAEIFIPSAYKNLPNVFAHPLIVANALIRRLYTFGLNSVQVALFRFQSGIKPSFLLWKNKAIETYINVNTSFAHKNLSDIKGLVSLWVQEALEARSRQLPGNATLDWQLIKFNAVPKLVSVQPIMIPGMPLEHLQLVYKFDTKQRLIKVNQQTKKTETLDRDVVDYIAFLCDATTNDMILMGSLFESKPNDKLPKSYEDDAKVAIHRMKVNGDIYRLPPS.

Residues 1–33 constitute a mitochondrion transit peptide; the sequence is MSVLRSTCLFFPPRSLLISFNKRRLFSTSRLIL.

As to quaternary structure, interacts with OXA1 and MDM38. Binds to mitoribosomes in order to recruit them to the mitochondrial inner membrane.

Its subcellular location is the mitochondrion inner membrane. Mitochondrial inner membrane-associated mitoribosome receptor that spatially aligns the mitoribosome exit tunnel with the membrane insertion machinery and allows cotranslational protein membrane insertion. The polypeptide is Inner membrane mitoribosome receptor MBA1, mitochondrial (Saccharomyces cerevisiae (strain ATCC 204508 / S288c) (Baker's yeast)).